The chain runs to 170 residues: Photosystem I assembly protein Ycf3 (170 aa).

TPR repeat units follow at residues 35-69, 73-106, and 121-154; these read AFTY…EIDP, SYIL…NPSL, and GEQA…APGN.

It belongs to the Ycf3 family.

Its subcellular location is the plastid. The protein resides in the chloroplast thylakoid membrane. Functionally, essential for the assembly of the photosystem I (PSI) complex. May act as a chaperone-like factor to guide the assembly of the PSI subunits. The chain is Photosystem I assembly protein Ycf3 from Cycas taitungensis (Prince sago).